The following is a 123-amino-acid chain: UPF0102 protein SPO0400 (123 aa).

This sequence belongs to the UPF0102 family.

The polypeptide is UPF0102 protein SPO0400 (Ruegeria pomeroyi (strain ATCC 700808 / DSM 15171 / DSS-3) (Silicibacter pomeroyi)).